Reading from the N-terminus, the 72-residue chain is MATMAAVVGGGPQDEIPEADAVEQGRAVDFDDEAGLDTAYLSGGAGDRDASEADVVDQAFVVPVADDEEIDR.

This is an uncharacterized protein from Mycobacterium tuberculosis (strain ATCC 25618 / H37Rv).